We begin with the raw amino-acid sequence, 486 residues long: Chromosomal replication initiator protein DnaA (486 aa).

The segment at 1-79 is domain I, interacts with DnaA modulators; sequence MEKSKNIWSL…GYNNIVIVFT (79 aa). The segment at 79–141 is domain II; that stretch reads TNQPPKTHSN…EEEPTNFKNP (63 aa). Residues 142-358 form a domain III, AAA+ region region; that stretch reads FLKKRYTFEN…AAVTKLKAYI (217 aa). 4 residues coordinate ATP: Gly186, Gly188, Lys189, and Thr190. A domain IV, binds dsDNA region spans residues 359-486; sequence DLDNIEIDIE…TELMNKIKKN (128 aa).

It belongs to the DnaA family. In terms of assembly, oligomerizes as a right-handed, spiral filament on DNA at oriC.

The protein resides in the cytoplasm. Plays an essential role in the initiation and regulation of chromosomal replication. ATP-DnaA binds to the origin of replication (oriC) to initiate formation of the DNA replication initiation complex once per cell cycle. Binds the DnaA box (a 9 base pair repeat at the origin) and separates the double-stranded (ds)DNA. Forms a right-handed helical filament on oriC DNA; dsDNA binds to the exterior of the filament while single-stranded (ss)DNA is stabiized in the filament's interior. The ATP-DnaA-oriC complex binds and stabilizes one strand of the AT-rich DNA unwinding element (DUE), permitting loading of DNA polymerase. After initiation quickly degrades to an ADP-DnaA complex that is not apt for DNA replication. Binds acidic phospholipids. In terms of biological role, binds to the bpuR promoter, possibly at 5'-TTTTTAAA-3'. The chain is Chromosomal replication initiator protein DnaA from Borreliella burgdorferi (strain ATCC 35210 / DSM 4680 / CIP 102532 / B31) (Borrelia burgdorferi).